The following is a 493-amino-acid chain: MIFILLTTLLAVGGAQTANILAVLPTPAYSHHLVYQAYVQALADKCHNVTVVKPQLLDYAAANKQRCGRIEQIDADMSSQQYKKLVASSGAFRKRGVVSDETTVTAENYMGLVEMFRDQFDNAHVRSFLATNRTFDVVVVEAFADYALVFGHLFRPAPVIQIAPGYGLAENFDAVGAVGRHPVHYPNIWRSSSIGNADGALIEWRLYNEFELLARRSDALLKLQFGPNTPTIRQLRNNVQLLLLNLHPVYDNNRPVPPSVQYLGGGLHLTLEPPQRLDIELEKRLNASVNGTVYVSFGSSIDTNSIHAEFLQMLLDTFAKLDNRTVLWKVDDAVAKSVVLPRNVIAQKWFNQRAVLNHRNVVAFVTQGGLQSSDEALHARVPMVCLPMMGDQFHHSAKLEQFGVARALNTVTVSAAQLALAVGDVIADRLAYQLRMTNLLNVVAFDEATPADKAIKFTERVIRFGHDITRSECSLKSPSANTDYSDYFVRFPL.

Positions 1–17 are cleaved as a signal peptide; it reads MIFILLTTLLAVGGAQT.

This sequence belongs to the UDP-glycosyltransferase family.

Functionally, catalyzes the transfer of glucose from UDP-glucose to ecdysteroids which are insect molting hormones. Expression of egt interferes with normal insect development and block molting. The chain is Ecdysteroid UDP-glucosyltransferase (egt) from Choristoneura fumiferana defective polyhedrosis virus (Cfdef).